The chain runs to 175 residues: Mitochondrial inner membrane protease subunit 2 (175 aa).

Residues 19 to 37 (FFVAVPVAVTFLDRVACVA) form a helical membrane-spanning segment. Residues Ser43 and Lys91 contribute to the active site.

Belongs to the peptidase S26 family. IMP2 subfamily. In terms of assembly, heterodimer of 2 subunits, IMMPL1 and IMMPL2. As to expression, expressed in all tissues tested except adult liver and lung.

The protein resides in the mitochondrion inner membrane. Functionally, catalyzes the removal of transit peptides required for the targeting of proteins from the mitochondrial matrix, across the inner membrane, into the inter-membrane space. Known to process the nuclear encoded protein DIABLO. This chain is Mitochondrial inner membrane protease subunit 2 (IMMP2L), found in Homo sapiens (Human).